Here is a 340-residue protein sequence, read N- to C-terminus: UDP-3-O-acylglucosamine N-acyltransferase (340 aa).

The active-site Proton acceptor is the His-238.

It belongs to the transferase hexapeptide repeat family. LpxD subfamily. As to quaternary structure, homotrimer.

It catalyses the reaction a UDP-3-O-[(3R)-3-hydroxyacyl]-alpha-D-glucosamine + a (3R)-hydroxyacyl-[ACP] = a UDP-2-N,3-O-bis[(3R)-3-hydroxyacyl]-alpha-D-glucosamine + holo-[ACP] + H(+). The protein operates within bacterial outer membrane biogenesis; LPS lipid A biosynthesis. In terms of biological role, catalyzes the N-acylation of UDP-3-O-acylglucosamine using 3-hydroxyacyl-ACP as the acyl donor. Is involved in the biosynthesis of lipid A, a phosphorylated glycolipid that anchors the lipopolysaccharide to the outer membrane of the cell. In Psychromonas ingrahamii (strain DSM 17664 / CCUG 51855 / 37), this protein is UDP-3-O-acylglucosamine N-acyltransferase.